The chain runs to 209 residues: Uracil phosphoribosyltransferase (209 aa).

5-phospho-alpha-D-ribose 1-diphosphate-binding positions include arginine 79, arginine 104, and aspartate 131 to serine 139. Residues isoleucine 194 and glycine 199–alanine 201 each bind uracil. A 5-phospho-alpha-D-ribose 1-diphosphate-binding site is contributed by aspartate 200.

It belongs to the UPRTase family. Mg(2+) is required as a cofactor.

It carries out the reaction UMP + diphosphate = 5-phospho-alpha-D-ribose 1-diphosphate + uracil. It functions in the pathway pyrimidine metabolism; UMP biosynthesis via salvage pathway; UMP from uracil: step 1/1. With respect to regulation, allosterically activated by GTP. Catalyzes the conversion of uracil and 5-phospho-alpha-D-ribose 1-diphosphate (PRPP) to UMP and diphosphate. The chain is Uracil phosphoribosyltransferase from Mesorhizobium japonicum (strain LMG 29417 / CECT 9101 / MAFF 303099) (Mesorhizobium loti (strain MAFF 303099)).